We begin with the raw amino-acid sequence, 429 residues long: Protein S-Myc (429 aa).

Position 36 is a phosphotyrosine; by Tyr-kinases (Tyr36). A disordered region spans residues 301–325 (PLPYAEDARPLKKPRSQDPLGPLKC). Residues 346–398 (ERRRNHNRMERQRRDIMRSSFLNLRDLVPELVHNEKAAKVVILKKATEYIHTL) form the bHLH domain. A leucine-zipper region spans residues 398–419 (LQTDESKLLVEREKLYERKQQL).

Efficient DNA binding requires dimerization with another bHLH protein.

It is found in the nucleus. Its function is as follows. Has apoptosis-inducing activity. The chain is Protein S-Myc (Mycs) from Rattus norvegicus (Rat).